The sequence spans 411 residues: Metacaspase-1B (411 aa).

Residues 1 to 97 (MYHRHSAPPP…PPLEAQQFGN (97 aa)) form a disordered region. The span at 7 to 65 (APPPPGRSRGYPPPQQQWPPQPYQYLPYPPQGPPPAHTFPPPAHRSYPSPYPTPPPHSP) shows a compositional bias: pro residues. Active-site residues include H198 and C254.

The protein belongs to the peptidase C14B family.

Involved in cell death (apoptosis). The polypeptide is Metacaspase-1B (casB) (Neosartorya fischeri (strain ATCC 1020 / DSM 3700 / CBS 544.65 / FGSC A1164 / JCM 1740 / NRRL 181 / WB 181) (Aspergillus fischerianus)).